Consider the following 445-residue polypeptide: MKERKFFGTDGIRGKVGSGQMTPELALKLGWAAGRVLSRSGTKKVIIGKDTRISGYMFESALEAGLSAAGLNVMLMGPMPTPAVAYLTRTFRAEAGVVISASHNPYYDNGIKFFSTDGSKLDDNLELEIEAELEKPLVCVESHLLGKVSRIEDARGRYIEYCKGNFPAEHTLTGLKIVVDCAHGATYHIAPAVFRELGAEVIAIGDKPNGMNINDKVGATSMGKICETVLAENADLGIALDGDGDRIMMVNSKGEVIDGDQILYILACDAKSRGVLRGGVVGTLMSNLGLDLALQALDIPFARSKVGDRYVMELLKELDWRIGGENSGHILNLDHGTTGDGIVAGILVLAAMRRQNATLEELTSAMEMLPQVLVNVRFEGEHDPLKSDKVKAAQAQVESELGVRGRVLLRKSGTEPLIRVMVEGDDHSAVLAHANLIADAVKSVS.

The active-site Phosphoserine intermediate is the Ser-102. Residues Ser-102, Asp-241, Asp-243, and Asp-245 each contribute to the Mg(2+) site. At Ser-102 the chain carries Phosphoserine.

Belongs to the phosphohexose mutase family. Mg(2+) is required as a cofactor. Activated by phosphorylation.

It carries out the reaction alpha-D-glucosamine 1-phosphate = D-glucosamine 6-phosphate. Its function is as follows. Catalyzes the conversion of glucosamine-6-phosphate to glucosamine-1-phosphate. This is Phosphoglucosamine mutase 1 from Shewanella baltica (strain OS185).